Reading from the N-terminus, the 196-residue chain is Signal peptidase complex catalytic subunit SEC11 (196 aa).

Over Met1–Gln14 the chain is Cytoplasmic. The helical; Signal-anchor for type II membrane protein transmembrane segment at Thr15–Trp33 threads the bilayer. Topologically, residues Lys34–Glu196 are lumenal. Catalysis depends on charge relay system residues Ser53 and His92. The segment at Val101–Asn133 is disordered. The segment covering Ser118–Asn133 has biased composition (polar residues). Asn134 is a glycosylation site (N-linked (GlcNAc...) asparagine). Residue Asp138 is the Charge relay system of the active site. Residues Val182–Leu193 are C-terminal short (CTS) helix.

Belongs to the peptidase S26B family. In terms of assembly, component of the signal peptidase complex (SPC) composed of a catalytic subunit SEC11 and three accessory subunits SPC1, SPC2 and SPC3. The complex induces a local thinning of the ER membrane which is used to measure the length of the signal peptide (SP) h-region of protein substrates. This ensures the selectivity of the complex towards h-regions shorter than 18-20 amino acids. SPC associates with the translocon complex.

It localises to the endoplasmic reticulum membrane. It catalyses the reaction Cleavage of hydrophobic, N-terminal signal or leader sequences from secreted and periplasmic proteins.. Catalytic component of the signal peptidase complex (SPC) which catalyzes the cleavage of N-terminal signal sequences from nascent proteins as they are translocated into the lumen of the endoplasmic reticulum. Specifically cleaves N-terminal signal peptides that contain a hydrophobic alpha-helix (h-region) shorter than 18-20 amino acids. This Ajellomyces dermatitidis (strain ER-3 / ATCC MYA-2586) (Blastomyces dermatitidis) protein is Signal peptidase complex catalytic subunit SEC11 (SEC11).